Reading from the N-terminus, the 470-residue chain is 1-aminocyclopropane-1-carboxylate synthase 9 (470 aa).

2 residues coordinate substrate: E47 and Y85. An N6-(pyridoxal phosphate)lysine modification is found at K272.

Belongs to the class-I pyridoxal-phosphate-dependent aminotransferase family. As to quaternary structure, homodimer and heterodimer. In vivo, the relevance of heterodimerization with other ACS enzymes is however unsure. Interacts (via its C-terminal region) with FEI1, FEI2, ETO1 and EOL1. Pyridoxal 5'-phosphate serves as cofactor. In terms of processing, may be processed at its C-terminus. Expressed in roots and siliques.

It carries out the reaction S-adenosyl-L-methionine = 1-aminocyclopropane-1-carboxylate + S-methyl-5'-thioadenosine + H(+). It functions in the pathway alkene biosynthesis; ethylene biosynthesis via S-adenosyl-L-methionine; ethylene from S-adenosyl-L-methionine: step 1/2. 1-aminocyclopropane-1-carboxylate synthase (ACS) enzymes catalyze the conversion of S-adenosyl-L-methionine (SAM) into 1-aminocyclopropane-1-carboxylate (ACC), a direct precursor of ethylene. This chain is 1-aminocyclopropane-1-carboxylate synthase 9 (ACS9), found in Arabidopsis thaliana (Mouse-ear cress).